Consider the following 450-residue polypeptide: Sulfite exporter TauE/SafE family protein 1 (450 aa).

A run of 12 helical transmembrane segments spans residues 5 to 25, 48 to 68, 70 to 90, 97 to 117, 130 to 150, 153 to 173, 223 to 243, 261 to 281, 316 to 336, 340 to 360, 378 to 398, and 408 to 428; these read LVPL…SALA, TIEV…AASI, SAGG…IAGL, SFSA…NLFL, FDLA…GVIC, MFPN…STMK, FPWM…SINL, ALYW…TLCI, VMAL…GMLI, LLQI…MVLF, GTAA…LMVV, and ASII…LMTT.

The protein belongs to the 4-toluene sulfonate uptake permease (TSUP) (TC 2.A.102) family.

The protein localises to the membrane. In Arabidopsis thaliana (Mouse-ear cress), this protein is Sulfite exporter TauE/SafE family protein 1.